The following is a 644-amino-acid chain: MNVTKLNLNAPSQGDPKELQTHFIVNKNKSQYVKFPSLQDRNAVDSFHEFLCKYNVWKTTDRVILTEKSFKYEPSSCFSDISFMITFYDIFCRAKEESIKKQKEQINIVKPNNYPTGFQHVHVSQQIQHDQHPQYNKHPQNNHHPQNTQHSQNNPIDKNINESENKEDLSDRSSDSANSEESHNSQYSQDSGDSRNYQDSEDNKGNIPTGKKTEQNKLIVQRLTNPKITPDTINDSNKDSNKDLNKDLSKNQSGESIKDKSKGPSKNLSKDSSKNKSKETSGSNLPDKISEDGDDLDDLGNDIDNFMDSSDYEDSDQDAISENPSDFDEDDSDDDDSNTEILEQILEISDNEHMELSSDLLEELNKKSPSNSKKSKTNQKLSQSSKKISSKTITNSGSKSQKQEPSTFSVKLKGKVSNGKTNKKTGKNIEESDWENSQSDSDHSESSDDSDNESDNESDNESNNDSDNETDSEIDDDKNNATPNIKLIKKSKKLSPKTPMKPNNKTTSVSKPVSKPPVKSSIKNNTKNNKPVPKPIKNPKKLSKQKDQSESQSDKDIDTDSENLPVSKKPPTNKSQVPKRPVGRPPKSVSLPSSPKKPKRNIGGSKTAKTQNKSKSQPKTNGSKTSTKSIPGSKAVGKKKPTKK.

Residues 123-644 (VSQQIQHDQH…AVGKKKPTKK (522 aa)) form a disordered region. Low complexity predominate over residues 133–155 (PQYNKHPQNNHHPQNTQHSQNNP). The segment covering 159–174 (NINESENKEDLSDRSS) has biased composition (basic and acidic residues). Residues 175–191 (DSANSEESHNSQYSQDS) are compositionally biased toward polar residues. Residues 192–204 (GDSRNYQDSEDNK) show a composition bias toward basic and acidic residues. The span at 216-233 (NKLIVQRLTNPKITPDTI) shows a compositional bias: polar residues. Basic and acidic residues-rich tracts occupy residues 236-249 (SNKD…KDLS) and 256-279 (SIKD…KSKE). Composition is skewed to acidic residues over residues 292 to 301 (DGDDLDDLGN) and 310 to 338 (SDYE…DDSN). Over residues 367 to 400 (KSPSNSKKSKTNQKLSQSSKKISSKTITNSGSKS) the composition is skewed to low complexity. Positions 447–476 (SDDSDNESDNESDNESNNDSDNETDSEIDD) are enriched in acidic residues. Residues 496-531 (PKTPMKPNNKTTSVSKPVSKPPVKSSIKNNTKNNKP) are compositionally biased toward low complexity. Residues 544–558 (KQKDQSESQSDKDID) are compositionally biased toward basic and acidic residues. Positions 585–594 (PPKSVSLPSS) are enriched in low complexity. A compositionally biased stretch (polar residues) spans 607–630 (TAKTQNKSKSQPKTNGSKTSTKSI).

This is an uncharacterized protein from Acanthamoeba polyphaga mimivirus (APMV).